Consider the following 215-residue polypeptide: UPF0441 protein SG0265 (215 aa).

The protein belongs to the UPF0441 family.

The chain is UPF0441 protein SG0265 from Sodalis glossinidius (strain morsitans).